A 208-amino-acid polypeptide reads, in one-letter code: 28 kDa heat- and acid-stable phosphoprotein homolog (208 aa).

Disordered stretches follow at residues 1 to 133 and 145 to 208; these read MAGG…VTKK and LSRR…LGLA. Basic and acidic residues predominate over residues 16–44; sequence FGRDYERSKGKISRDRVYDEEDIIKRNQE. Low complexity-rich tracts occupy residues 52-69 and 84-100; these read GSES…NKSK and RNPN…PTTK. A compositionally biased stretch (acidic residues) spans 105–121; that stretch reads SDSEDDSDKESDSEDEI. Positions 137–206 form a coiled coil; that stretch reads INVNAKVELS…EKMAERRRLG (70 aa). Basic and acidic residues-rich tracts occupy residues 145 to 154 and 162 to 208; these read LSRREKEELA and QNEK…LGLA.

It belongs to the PDAP1 family.

The sequence is that of 28 kDa heat- and acid-stable phosphoprotein homolog from Dictyostelium discoideum (Social amoeba).